The sequence spans 251 residues: Cytochrome c oxidase subunit 2 (251 aa).

An N-terminal signal peptide occupies residues 1–15; the sequence is MLNLLYNQIFNVILN. Topologically, residues 16–41 are mitochondrial intermembrane; the sequence is DVPTPYNTYFQDSATPNQEGILELHD. The chain crosses the membrane as a helical span at residues 42–62; that stretch reads NIMFYLLVILGLVSWLLFTIT. Residues 63-82 are Mitochondrial matrix-facing; that stretch reads RTYSKNPIAYKYIKHGQTIE. A helical transmembrane segment spans residues 83–103; it reads IIWTIFPAVILLIIAFPSFIL. The Mitochondrial intermembrane portion of the chain corresponds to 104–251; the sequence is LYLCDEVISP…PAFLEWLNEQ (148 aa). Cu cation contacts are provided by His186, Cys221, Glu223, Cys225, His229, and Met232. Mg(2+) is bound at residue Glu223.

It belongs to the cytochrome c oxidase subunit 2 family. As to quaternary structure, component of the cytochrome c oxidase (complex IV, CIV), a multisubunit enzyme composed of a catalytic core of 3 subunits and several supernumerary subunits. The complex exists as a monomer or a dimer and forms supercomplexes (SCs) in the inner mitochondrial membrane with ubiquinol-cytochrome c oxidoreductase (cytochrome b-c1 complex, complex III, CIII). The cofactor is Cu cation. The signal sequence of COX2 is processed by IMP1.

The protein localises to the mitochondrion inner membrane. It carries out the reaction 4 Fe(II)-[cytochrome c] + O2 + 8 H(+)(in) = 4 Fe(III)-[cytochrome c] + 2 H2O + 4 H(+)(out). Functionally, component of the cytochrome c oxidase, the last enzyme in the mitochondrial electron transport chain which drives oxidative phosphorylation. The respiratory chain contains 3 multisubunit complexes succinate dehydrogenase (complex II, CII), ubiquinol-cytochrome c oxidoreductase (cytochrome b-c1 complex, complex III, CIII) and cytochrome c oxidase (complex IV, CIV), that cooperate to transfer electrons derived from NADH and succinate to molecular oxygen, creating an electrochemical gradient over the inner membrane that drives transmembrane transport and the ATP synthase. Cytochrome c oxidase is the component of the respiratory chain that catalyzes the reduction of oxygen to water. Electrons originating from reduced cytochrome c in the intermembrane space (IMS) are transferred via the dinuclear copper A center (CU(A)) of subunit 2 and heme A of subunit 1 to the active site in subunit 1, a binuclear center (BNC) formed by heme A3 and copper B (CU(B)). The BNC reduces molecular oxygen to 2 water molecules using 4 electrons from cytochrome c in the IMS and 4 protons from the mitochondrial matrix. The polypeptide is Cytochrome c oxidase subunit 2 (COX2) (Lachancea thermotolerans (strain ATCC 56472 / CBS 6340 / NRRL Y-8284) (Yeast)).